Here is a 388-residue protein sequence, read N- to C-terminus: MVGTPLFSNAKKILLLGSGELGKEVIIEAQRFGVECIAVDSYENAPAMQVAHRFHVIDMKDGGALRAVIEREKPDLIVPEIEAINTDTLKELETEGYHVVPTANATKLTMDREGIRRLAFEKLGLRTAKYEFAESLEELKEAVQRIGIPCVIKPIMSSSGKGQSTIKSERDIEKSWDYAKSAARGIGTKVIVEEFIKFDYEITLLTARTSEGTKFCEPIGHIQIDGDYHESWQPHPMCAPTKAKAQEMAKKITDELGGYGIFGVELFVLDDEVIFSEVSPRPHDTGMVTMVTQKMSEFEIHARAILGLPVNVDILFPGASHVIKSEILKWAPEYEIHEASKVKDTKIRLFGKPIAKVGRRMGVALAVSDDITKARENAEKAAHLVNIK.

N(1)-(5-phospho-beta-D-ribosyl)glycinamide is bound by residues 20-21 (EL) and Glu-80. ATP is bound by residues Arg-112, Lys-153, 158–163 (SSGKGQ), 193–196 (EEFI), and Glu-201. Residues 117 to 306 (RLAFEKLGLR…EFEIHARAIL (190 aa)) enclose the ATP-grasp domain. Mg(2+)-binding residues include Glu-265 and Glu-277. N(1)-(5-phospho-beta-D-ribosyl)glycinamide-binding positions include Asp-284, Lys-352, and 359-360 (RR).

This sequence belongs to the PurK/PurT family. Homodimer.

It carries out the reaction N(1)-(5-phospho-beta-D-ribosyl)glycinamide + formate + ATP = N(2)-formyl-N(1)-(5-phospho-beta-D-ribosyl)glycinamide + ADP + phosphate + H(+). It functions in the pathway purine metabolism; IMP biosynthesis via de novo pathway; N(2)-formyl-N(1)-(5-phospho-D-ribosyl)glycinamide from N(1)-(5-phospho-D-ribosyl)glycinamide (formate route): step 1/1. Its function is as follows. Involved in the de novo purine biosynthesis. Catalyzes the transfer of formate to 5-phospho-ribosyl-glycinamide (GAR), producing 5-phospho-ribosyl-N-formylglycinamide (FGAR). Formate is provided by PurU via hydrolysis of 10-formyl-tetrahydrofolate. The protein is Formate-dependent phosphoribosylglycinamide formyltransferase of Methanococcus maripaludis (strain C7 / ATCC BAA-1331).